We begin with the raw amino-acid sequence, 271 residues long: Norsolorinic acid ketoreductase (271 aa).

Residues 1-22 (MNGSLSQHDQERLSTPYRDGPP) form a disordered region. NADP(+)-binding residues include I36, N112, Y185, K189, V216, and T218. The Proton donor role is filled by Y185. Residue K189 is the Lowers pKa of active site Tyr of the active site.

It belongs to the short-chain dehydrogenases/reductases (SDR) family.

It is found in the cytoplasm. The protein resides in the cytosol. It localises to the vacuole. It catalyses the reaction (1'S)-averantin + NADP(+) = norsolorinic acid + NADPH + H(+). The protein operates within mycotoxin biosynthesis; aflatoxin biosynthesis. Its function is as follows. Norsolorinic acid ketoreductase; part of the gene cluster that mediates the biosynthesis of aflatoxins, a group of polyketide-derived furanocoumarins, and part of the most toxic and carcinogenic compounds among the known mycotoxins. The four major aflatoxins produced by A.parasiticus are aflatoxin B1 (AFB1), aflatoxin B2 (AFB2), aflatoxin G1 (AFG1) and aflatoxin G2 (AFG2). Within the aflatoxin pathway, the norsolorinic acid ketoreductase aflD performs the second step by catalyzing the dehydration of norsolorinic acid (NOR) to form (1'S)-averantin (AVN). The biosynthesis of aflatoxins begins with the norsolorinic acid synthase aflC that combines a hexanoyl starter unit produced by the fatty acid synthase aflA/aflB and 7 malonyl-CoA extender units to synthesize the precursor NOR. The second step is the conversion of NOR to averantin and requires the norsolorinic acid ketoreductase aflD, which catalyzes the dehydration of norsolorinic acid to form (1'S)-averantin. The norsolorinic acid reductases aflE and aflF may also play a role in the conversion of NOR to AVN. The cytochrome P450 monooxygenase aflG then catalyzes the hydroxylation of AVN to 5'hydroxyaverantin (HAVN). The next step is performed by the 5'-hydroxyaverantin dehydrogenase aflH that transforms HAVN to 5'-oxoaverantin (OAVN) which is further converted to averufin (AVF) by aflK that plays a dual role in the pathway, as a 5'-oxoaverantin cyclase that mediates conversion of 5'-oxoaverantin, as well as a versicolorin B synthase in a later step in the pathway. The averufin oxidase aflI catalyzes the conversion of AVF to versiconal hemiacetal acetate (VHA). VHA is then the substrate for the versiconal hemiacetal acetate esterase aflJ to yield versiconal (VAL). Versicolorin B synthase aflK then converts VAL to versicolorin B (VERB) by closing the bisfuran ring of aflatoxin which is required for DNA-binding, thus giving to aflatoxin its activity as a mutagen. Then, the activity of the versicolorin B desaturase aflL leads to versicolorin A (VERA). A branch point starts from VERB since it can also be converted to dihydrodemethylsterigmatocystin (DMDHST), probably also by aflL, VERA being a precursor for aflatoxins B1 and G1, and DMDHST for aflatoxins B2 and G2. Next, the versicolorin reductase aflM and the cytochrome P450 monooxygenase aflN are involved in conversion of VERA to demethylsterigmatocystin (DMST). AflX and aflY seem also involved in this step, through probable aflX-mediated epoxide ring-opening step following versicolorin A oxidation and aflY-mediated Baeyer-Villiger oxidation required for the formation of the xanthone ring. The methyltransferase aflO then leads to the modification of DMST to sterigmatocystin (ST), and of DMDHST to dihydrosterigmatocystin (DHST). Both ST and DHST are then substrates of the O-methyltransferase aflP to yield O-methylsterigmatocystin (OMST) and dihydro-O-methylsterigmatocystin (DHOMST), respectively. Finally OMST is converted to aflatoxins B1 and G1, and DHOMST to aflatoxins B2 and G2, via the action of several enzymes including O-methylsterigmatocystin oxidoreductase aflQ, the cytochrome P450 monooxygenase aflU, but also the NADH-dependent flavin oxidoreductase nadA which is specifically required for the synthesis of AFG1. This chain is Norsolorinic acid ketoreductase, found in Aspergillus parasiticus (strain ATCC 56775 / NRRL 5862 / SRRC 143 / SU-1).